Here is a 672-residue protein sequence, read N- to C-terminus: Glycine--tRNA ligase beta subunit (672 aa).

Belongs to the class-II aminoacyl-tRNA synthetase family. Tetramer of two alpha and two beta subunits.

It localises to the cytoplasm. The enzyme catalyses tRNA(Gly) + glycine + ATP = glycyl-tRNA(Gly) + AMP + diphosphate. The protein is Glycine--tRNA ligase beta subunit (glyS) of Thermotoga maritima (strain ATCC 43589 / DSM 3109 / JCM 10099 / NBRC 100826 / MSB8).